Consider the following 146-residue polypeptide: Putative pre-16S rRNA nuclease (146 aa).

It belongs to the YqgF nuclease family.

It is found in the cytoplasm. Its function is as follows. Could be a nuclease involved in processing of the 5'-end of pre-16S rRNA. The sequence is that of Putative pre-16S rRNA nuclease from Pediococcus pentosaceus (strain ATCC 25745 / CCUG 21536 / LMG 10740 / 183-1w).